Reading from the N-terminus, the 253-residue chain is Chitooligosaccharide deacetylase (253 aa).

Mg(2+)-binding residues include His-61 and His-126.

Belongs to the YdjC deacetylase family. ChbG subfamily. In terms of assembly, homodimer. Requires Mg(2+) as cofactor.

Its subcellular location is the cytoplasm. The catalysed reaction is N,N'-diacetylchitobiose + H2O = N-acetyl-beta-D-glucosaminyl-(1-&gt;4)-D-glucosamine + acetate. It catalyses the reaction diacetylchitobiose-6'-phosphate + H2O = N'-monoacetylchitobiose-6'-phosphate + acetate. It participates in glycan degradation; chitin degradation. Involved in the degradation of chitin. ChbG is essential for growth on the acetylated chitooligosaccharides chitobiose and chitotriose but is dispensable for growth on cellobiose and chitosan dimer, the deacetylated form of chitobiose. Deacetylation of chitobiose-6-P and chitotriose-6-P is necessary for both the activation of the chb promoter by the regulatory protein ChbR and the hydrolysis of phosphorylated beta-glucosides by the phospho-beta-glucosidase ChbF. Catalyzes the removal of only one acetyl group from chitobiose-6-P to yield monoacetylchitobiose-6-P, the inducer of ChbR and the substrate of ChbF. This is Chitooligosaccharide deacetylase from Yersinia enterocolitica serotype O:8 / biotype 1B (strain NCTC 13174 / 8081).